A 742-amino-acid chain; its full sequence is Protein CdcH (742 aa).

Residues 230–237 and 503–510 each bind ATP; these read GPPGTGKT. The disordered stretch occupies residues 722–742; the sequence is FKGSQGPNVNSRQGSEHIGFQ. Residues 723-734 are compositionally biased toward polar residues; sequence KGSQGPNVNSRQ.

Belongs to the AAA ATPase family. CDC48 subfamily.

Its function is as follows. May be part of a transduction pathway connecting light to cell division. This chain is Protein CdcH (cdcH), found in Halobacterium salinarum (strain ATCC 700922 / JCM 11081 / NRC-1) (Halobacterium halobium).